Reading from the N-terminus, the 484-residue chain is Aspartyl/glutamyl-tRNA(Asn/Gln) amidotransferase subunit B (484 aa).

This sequence belongs to the GatB/GatE family. GatB subfamily. Heterotrimer of A, B and C subunits.

It catalyses the reaction L-glutamyl-tRNA(Gln) + L-glutamine + ATP + H2O = L-glutaminyl-tRNA(Gln) + L-glutamate + ADP + phosphate + H(+). The enzyme catalyses L-aspartyl-tRNA(Asn) + L-glutamine + ATP + H2O = L-asparaginyl-tRNA(Asn) + L-glutamate + ADP + phosphate + 2 H(+). Its function is as follows. Allows the formation of correctly charged Asn-tRNA(Asn) or Gln-tRNA(Gln) through the transamidation of misacylated Asp-tRNA(Asn) or Glu-tRNA(Gln) in organisms which lack either or both of asparaginyl-tRNA or glutaminyl-tRNA synthetases. The reaction takes place in the presence of glutamine and ATP through an activated phospho-Asp-tRNA(Asn) or phospho-Glu-tRNA(Gln). In Anaeromyxobacter dehalogenans (strain 2CP-C), this protein is Aspartyl/glutamyl-tRNA(Asn/Gln) amidotransferase subunit B.